Consider the following 314-residue polypeptide: Aspartate carbamoyltransferase catalytic subunit (314 aa).

Carbamoyl phosphate contacts are provided by Arg-55 and Thr-56. Residue Lys-83 coordinates L-aspartate. Positions 105, 139, and 142 each coordinate carbamoyl phosphate. L-aspartate-binding residues include Arg-172 and Arg-226. Residues Gly-267 and Pro-268 each coordinate carbamoyl phosphate.

This sequence belongs to the aspartate/ornithine carbamoyltransferase superfamily. ATCase family. In terms of assembly, heterododecamer (2C3:3R2) of six catalytic PyrB chains organized as two trimers (C3), and six regulatory PyrI chains organized as three dimers (R2).

It carries out the reaction carbamoyl phosphate + L-aspartate = N-carbamoyl-L-aspartate + phosphate + H(+). Its pathway is pyrimidine metabolism; UMP biosynthesis via de novo pathway; (S)-dihydroorotate from bicarbonate: step 2/3. In terms of biological role, catalyzes the condensation of carbamoyl phosphate and aspartate to form carbamoyl aspartate and inorganic phosphate, the committed step in the de novo pyrimidine nucleotide biosynthesis pathway. This chain is Aspartate carbamoyltransferase catalytic subunit, found in Rhodococcus jostii (strain RHA1).